A 355-amino-acid polypeptide reads, in one-letter code: 4-dimethylallyltryptophan N-methyltransferase easF (355 aa).

This sequence belongs to the methyltransferase superfamily. In terms of assembly, homodimer.

The enzyme catalyses 4-(3-methylbut-2-enyl)-L-tryptophan + S-adenosyl-L-methionine = 4-(3-methylbut-2-enyl)-L-abrine + S-adenosyl-L-homocysteine + H(+). Its pathway is alkaloid biosynthesis; ergot alkaloid biosynthesis. Its function is as follows. 4-dimethylallyltryptophan N-methyltransferase; part of the gene cluster that mediates the biosynthesis of fungal ergot alkaloid. DmaW catalyzes the first step of ergot alkaloid biosynthesis by condensing dimethylallyl diphosphate (DMAP) and tryptophan to form 4-dimethylallyl-L-tryptophan. The second step is catalyzed by the methyltransferase easF that methylates 4-dimethylallyl-L-tryptophan in the presence of S-adenosyl-L-methionine, resulting in the formation of 4-dimethylallyl-L-abrine. The catalase easC and the FAD-dependent oxidoreductase easE then transform 4-dimethylallyl-L-abrine to chanoclavine-I which is further oxidized by easD in the presence of NAD(+), resulting in the formation of chanoclavine-I aldehyde. Agroclavine dehydrogenase easG then mediates the conversion of chanoclavine-I aldehyde to agroclavine via a non-enzymatic adduct reaction: the substrate is an iminium intermediate that is formed spontaneously from chanoclavine-I aldehyde in the presence of glutathione. Further conversion of agroclavine to paspalic acid is a two-step process involving oxidation of agroclavine to elymoclavine and of elymoclavine to paspalic acid, the second step being performed by the elymoclavine oxidase cloA. However, cloA does not encode a functional enzyme indicating that C.fusiformis terminates its ergot alkaloid pathway at elymoclavine. This chain is 4-dimethylallyltryptophan N-methyltransferase easF, found in Claviceps fusiformis (Ergot fungus).